The chain runs to 261 residues: Kallikrein-1E2 (261 aa).

The N-terminal stretch at 1–17 is a signal peptide; it reads MWFLVLCLDLSLGETGA. Positions 18-24 are cleaved as a propeptide — activation peptide; sequence LPPIQSR. Residues 25–258 enclose the Peptidase S1 domain; it reads IIGGWECEKH…HLKWIKETIE (234 aa). Intrachain disulfides connect Cys-31/Cys-173, Cys-50/Cys-66, Cys-152/Cys-219, Cys-184/Cys-198, and Cys-209/Cys-234. The Charge relay system role is filled by His-65. An N-linked (GlcNAc...) asparagine glycan is attached at Asn-79. Asp-120 serves as the catalytic Charge relay system. Ser-213 serves as the catalytic Charge relay system.

Belongs to the peptidase S1 family. Kallikrein subfamily. Detected in prostate and semen.

It is found in the secreted. The enzyme catalyses Preferential cleavage of Arg-|-Xaa bonds in small molecule substrates. Highly selective action to release kallidin (lysyl-bradykinin) from kininogen involves hydrolysis of Met-|-Xaa or Leu-|-Xaa.. Glandular kallikreins cleave Met-Lys and Arg-Ser bonds in kininogen to release Lys-bradykinin. This is Kallikrein-1E2 (KLK1E2) from Equus caballus (Horse).